The primary structure comprises 499 residues: Probable alpha-L-arabinofuranosidase B (499 aa).

A signal peptide spans 1–17; the sequence is MFSRRNLLALGLAATVS. Residues 18–335 form a catalytic region; that stretch reads AGPCDIYEAG…ENIVAAKYVV (318 aa). 3 cysteine pairs are disulfide-bonded: Cys21–Cys31, Cys81–Cys86, and Cys176–Cys177. N-linked (GlcNAc...) asparagine glycosylation is present at Asn83. Asn202 carries N-linked (GlcNAc...) asparagine glycosylation. Position 219 (Asp219) interacts with substrate. Glu221 acts as the Nucleophile in catalysis. Positions 222, 223, 296, 416, 418, 419, 435, 463, 465, 468, and 488 each coordinate substrate. The interval 336–499 is ABD; that stretch reads GSLVSGPSFT…SFEIETAFAS (164 aa). An intrachain disulfide couples Cys401 to Cys439.

This sequence belongs to the glycosyl hydrolase 54 family.

It localises to the secreted. It catalyses the reaction Hydrolysis of terminal non-reducing alpha-L-arabinofuranoside residues in alpha-L-arabinosides.. Its pathway is glycan metabolism; L-arabinan degradation. Its function is as follows. Alpha-L-arabinofuranosidase involved in the degradation of arabinoxylan, a major component of plant hemicellulose. Able to hydrolyze 1,5-, 1,3- and 1,2-alpha-linkages not only in L-arabinofuranosyl oligosaccharides, but also in polysaccharides containing terminal non-reducing L-arabinofuranoses in side chains, like L-arabinan, arabinogalactan and arabinoxylan. This is Probable alpha-L-arabinofuranosidase B (abfB) from Aspergillus awamori (Black koji mold).